Reading from the N-terminus, the 33-residue chain is Lysozyme C, spleen isozyme (33 aa).

Belongs to the glycosyl hydrolase 22 family. In terms of assembly, monomer.

The enzyme catalyses Hydrolysis of (1-&gt;4)-beta-linkages between N-acetylmuramic acid and N-acetyl-D-glucosamine residues in a peptidoglycan and between N-acetyl-D-glucosamine residues in chitodextrins.. Lysozymes have primarily a bacteriolytic function; those in tissues and body fluids are associated with the monocyte-macrophage system and enhance the activity of immunoagents. The sequence is that of Lysozyme C, spleen isozyme from Equus caballus (Horse).